A 473-amino-acid polypeptide reads, in one-letter code: Glucose-1-phosphate adenylyltransferase small subunit, chloroplastic/amyloplastic (473 aa).

The interval M1–N36 is disordered. A compositionally biased stretch (basic and acidic residues) spans S16–N36.

This sequence belongs to the bacterial/plant glucose-1-phosphate adenylyltransferase family. As to quaternary structure, heterotetramer. As to expression, abundantly expressed in the whole grains, a slightly less abundant expression is seen in leaves, while a low level expression is seen in the roots. A greater expression is seen in the endosperm than in the embryo and pericarp layers.

It is found in the plastid. The protein localises to the chloroplast. It localises to the amyloplast. It carries out the reaction alpha-D-glucose 1-phosphate + ATP + H(+) = ADP-alpha-D-glucose + diphosphate. Its pathway is glycan biosynthesis; starch biosynthesis. With respect to regulation, insensitive to 3'phosphoglycerate and orthophosphate. This protein plays a role in synthesis of starch. It catalyzes the synthesis of the activated glycosyl donor, ADP-glucose from Glc-1-P and ATP. The protein is Glucose-1-phosphate adenylyltransferase small subunit, chloroplastic/amyloplastic (AGP-S) of Triticum aestivum (Wheat).